We begin with the raw amino-acid sequence, 373 residues long: Chorismate synthase (373 aa).

Arginine 46 contacts NADP(+). FMN is bound by residues 123-125 (RSS), 251-252 (NA), glycine 295, 310-314 (KPTPS), and arginine 337.

This sequence belongs to the chorismate synthase family. The cofactor is FMNH2.

It catalyses the reaction 5-O-(1-carboxyvinyl)-3-phosphoshikimate = chorismate + phosphate. It participates in metabolic intermediate biosynthesis; chorismate biosynthesis; chorismate from D-erythrose 4-phosphate and phosphoenolpyruvate: step 7/7. In terms of biological role, catalyzes the anti-1,4-elimination of the C-3 phosphate and the C-6 proR hydrogen from 5-enolpyruvylshikimate-3-phosphate (EPSP) to yield chorismate, which is the branch point compound that serves as the starting substrate for the three terminal pathways of aromatic amino acid biosynthesis. This reaction introduces a second double bond into the aromatic ring system. The protein is Chorismate synthase of Methanococcus maripaludis (strain C7 / ATCC BAA-1331).